A 127-amino-acid polypeptide reads, in one-letter code: Ribonuclease P protein component (127 aa).

This sequence belongs to the RnpA family. In terms of assembly, consists of a catalytic RNA component (M1 or rnpB) and a protein subunit.

It carries out the reaction Endonucleolytic cleavage of RNA, removing 5'-extranucleotides from tRNA precursor.. RNaseP catalyzes the removal of the 5'-leader sequence from pre-tRNA to produce the mature 5'-terminus. It can also cleave other RNA substrates such as 4.5S RNA. The protein component plays an auxiliary but essential role in vivo by binding to the 5'-leader sequence and broadening the substrate specificity of the ribozyme. The chain is Ribonuclease P protein component from Prochlorococcus marinus (strain SARG / CCMP1375 / SS120).